An 880-amino-acid chain; its full sequence is Alanine--tRNA ligase (880 aa).

Residues His569, His573, Cys671, and His675 each contribute to the Zn(2+) site.

This sequence belongs to the class-II aminoacyl-tRNA synthetase family. In terms of assembly, homotetramer. The cofactor is Zn(2+).

It localises to the cytoplasm. It carries out the reaction tRNA(Ala) + L-alanine + ATP = L-alanyl-tRNA(Ala) + AMP + diphosphate. Catalyzes the attachment of alanine to tRNA(Ala) in a two-step reaction: alanine is first activated by ATP to form Ala-AMP and then transferred to the acceptor end of tRNA(Ala). Also edits incorrectly charged Ser-tRNA(Ala) and Gly-tRNA(Ala) via its editing domain. The polypeptide is Alanine--tRNA ligase (Buchnera aphidicola subsp. Baizongia pistaciae (strain Bp)).